The following is a 335-amino-acid chain: MALQALQSSGVAFRKILSHFPEELSLAFAYGSGVYRQAGPSSDQKNAMLDFVFTVDDPWHSKNLKRNWNHYSFLKVLGPRIITAVQNNYGAGVYYNTLITCDGRLIKYGVISTSVLIEDLLNWNNLYIAGRLQKPVKIVAMNEDVALRSALDQNLKSAVTAAFLMLPESFSEEDLFTEIAGLSYSGDFRMVVGEDKAKVLNIVKPNMAHFRELYGSILQESPQVVYKAQQGSLEIDKSPEGQFTQLMTLPKTLQQQINHIMDPPGKNRDVEETLLQVAHDPDCGDVVRLGLAAIVRPSSMRQSTKGIFTAGLKKSVVYSSLKLHKMWKGWVRKTS.

This sequence belongs to the TAM41 family. Requires Mg(2+) as cofactor.

Its subcellular location is the mitochondrion inner membrane. The enzyme catalyses a 1,2-diacyl-sn-glycero-3-phosphate + CTP + H(+) = a CDP-1,2-diacyl-sn-glycerol + diphosphate. It functions in the pathway phospholipid metabolism; CDP-diacylglycerol biosynthesis; CDP-diacylglycerol from sn-glycerol 3-phosphate: step 3/3. Its function is as follows. Catalyzes the conversion of phosphatidic acid (PA) to CDP-diacylglycerol (CDP-DAG), an essential intermediate in the synthesis of phosphatidylglycerol, cardiolipin and phosphatidylinositol. The sequence is that of Phosphatidate cytidylyltransferase, mitochondrial (TAMM41) from Bos taurus (Bovine).